The following is a 316-amino-acid chain: Bifunctional riboflavin kinase/FMN adenylyltransferase (316 aa).

This sequence belongs to the RibF family.

It catalyses the reaction riboflavin + ATP = FMN + ADP + H(+). It carries out the reaction FMN + ATP + H(+) = FAD + diphosphate. It functions in the pathway cofactor biosynthesis; FAD biosynthesis; FAD from FMN: step 1/1. Its pathway is cofactor biosynthesis; FMN biosynthesis; FMN from riboflavin (ATP route): step 1/1. In terms of biological role, catalyzes the phosphorylation of riboflavin to FMN followed by the adenylation of FMN to FAD. The chain is Bifunctional riboflavin kinase/FMN adenylyltransferase (ribC) from Bacillus subtilis (strain 168).